We begin with the raw amino-acid sequence, 154 residues long: Prefoldin subunit 5 (154 aa).

A2 is subject to N-acetylalanine. K42 bears the N6-acetyllysine mark. S56 carries the phosphoserine modification.

The protein belongs to the prefoldin subunit alpha family. In terms of assembly, heterohexamer of two PFD-alpha type and four PFD-beta type subunits.

Its subcellular location is the nucleus. Its function is as follows. Binds specifically to cytosolic chaperonin (c-CPN) and transfers target proteins to it. Binds to nascent polypeptide chain and promotes folding in an environment in which there are many competing pathways for nonnative proteins. Represses the transcriptional activity of MYC. In Pongo abelii (Sumatran orangutan), this protein is Prefoldin subunit 5 (PFDN5).